A 517-amino-acid chain; its full sequence is MFS efflux transporter inpD (517 aa).

A disordered region spans residues 1 to 24 (MEKTQTPSLTPDELSARSSTPFEE). Helical transmembrane passes span 37–57 (LKFS…ALSL), 59–79 (DIGW…LVFG), 89–109 (IVYL…ATAP), 112–132 (IALI…LSGA), and 151–171 (ILGA…GGII). An N-linked (GlcNAc...) asparagine glycan is attached at Asn172. 9 consecutive transmembrane segments (helical) span residues 178-198 (WIFY…VFLL), 219-239 (LPAF…LLWG), 247-267 (NARI…FMLV), 292-312 (FFSF…PIWL), 328-348 (LPII…TPVI), 352-372 (VPFM…LSTL), 381-401 (VLGF…QTLV), 412-432 (IPIG…IALS), and 485-505 (AIVK…IGVL).

It belongs to the major facilitator superfamily.

It is found in the cell membrane. In terms of biological role, MFS efflux transporter; part of the inp gene cluster that mediates the biosynthesis of fellutamide B, a mycotoxin that acts as a proteasome inhibitor. In the first step of fellutabmide B biosynthesis inpC activates 3-hydroxydodecanoic acid to generate 3-hydroxydodecanoyl-AMP that is then loaded onto the T0 domain of inpB. The 3-hydroxydodecanoyl-S-phosphopantetheinyl-T0 is sequentially extended with L-Asn and L-Gln by the two CAT modules of inpB. The linear lipodipeptide from inpB is then transferred onto inpA for the addition of the third amino acid, L-Leu. Reductive releasing of the lipotripeptide by the TE domain of inpA produces (2S)-fellutamide B. InpF might be involved in the release and transfer of the lipodipeptide from inpB to inpA. The inp cluster-encoded proteasome subunit inpE confers resistance to internally produced fellutamides. The MFS efflux transporter inpD may contribute to fellutamide resistance as well. In Emericella nidulans (strain FGSC A4 / ATCC 38163 / CBS 112.46 / NRRL 194 / M139) (Aspergillus nidulans), this protein is MFS efflux transporter inpD.